The chain runs to 946 residues: MSLLNDAALHHFENLNNRIDLNSLKLSQHTELMKVLGLSDFVAESLIKQPALLTDLLDNELLSLADRKEVITTELESAIAKVKDEVTLHRVLRLFRRKHMVVIAWRELLGKAHLVESLDHISYLADQLILQCMSWLYKKQCVEQGIPMNNEGVRQPFFIFAMGKLGGKELNFSSDIDLIFTYPERGETQGERRRIDNQSFFTKLGQRIIGALHQTTVDGFVYRVDMRLRPFGESGPLITNFASIEDYYQSHGRDWERYAMIKARVMGEEGDYKTTLEALLKPFVYRRYIDFSAIESLRKMKAMISSEVRRKGLKDNIKLGKGGIREIEFVAQAFQLIRGGRRAELQCKGLRETLKVLAEIGEVPKERVQSLLDAYHFLRAVENVLQQIGDKQTQTLPDNELDKLRLITVMGYSNWQDFYSKLNQEMDNVHAEFNWVIGDDEEAHDEADQALSELWALHLSQQEATHLLHEKGLDESLAAHFATALSALKEELKKRPIGPRGQATLDKLMPRMIELICVYPDPVELLNRITQLLLKIISRTAYLELLNENDGALKQLLKLCNESTRVASQLARHPILLDELLDPQQLYKPTQLDNYRTELQLFMLRIPEEDMEQQMEALRQFKQIQFLYIAAADIEKSIQLPQVSDHLTYLSEAIMDYVVQIAWLQMVDKFGLPSNVIGSDRKGFAVIGYGKMGGIELGYGSDLDVVFLHDDNIKGETNGRRKIDNQLFYFRLAQRIIHLFSARTNSGILYEIDMRLRPSGDSGILVSSVASYKKYLQNNAWTWEHQALVRARAVFFDKLILAKFNEARETVLSQARNNSALATEIRDMRAKMRKHLSREKEGQFDLKQSPGGMVDIEFFAQYLVLAHACHCGEELCKWSDNLRIFETCRKLGLLTLDEEKKLTGAYCALRDATHRLTLNKKTRIIKGDQFIQERQNVIKIWEKFLD.

The segment at 1–441 (MSLLNDAALH…EFNWVIGDDE (441 aa)) is adenylyl removase. Residues 448-946 (DQALSELWAL…VIKIWEKFLD (499 aa)) are adenylyl transferase.

It belongs to the GlnE family. Mg(2+) is required as a cofactor.

It carries out the reaction [glutamine synthetase]-O(4)-(5'-adenylyl)-L-tyrosine + phosphate = [glutamine synthetase]-L-tyrosine + ADP. It catalyses the reaction [glutamine synthetase]-L-tyrosine + ATP = [glutamine synthetase]-O(4)-(5'-adenylyl)-L-tyrosine + diphosphate. Functionally, involved in the regulation of glutamine synthetase GlnA, a key enzyme in the process to assimilate ammonia. When cellular nitrogen levels are high, the C-terminal adenylyl transferase (AT) inactivates GlnA by covalent transfer of an adenylyl group from ATP to specific tyrosine residue of GlnA, thus reducing its activity. Conversely, when nitrogen levels are low, the N-terminal adenylyl removase (AR) activates GlnA by removing the adenylyl group by phosphorolysis, increasing its activity. The regulatory region of GlnE binds the signal transduction protein PII (GlnB) which indicates the nitrogen status of the cell. The chain is Bifunctional glutamine synthetase adenylyltransferase/adenylyl-removing enzyme from Psychromonas ingrahamii (strain DSM 17664 / CCUG 51855 / 37).